Consider the following 260-residue polypeptide: MTEPAFFPETATSTAEPRLVVEPGVAARVAAIAEPVLEGLGYRLVRIKISGEAGCTVQIMAERPDGTMLIDDCEAVSKALSPVMDVADPIQRAYRLEISSPGIDRPLVRQSDFERYTGHLVKIEMAAPHEGRKRFRGTLQGIEDNLVRITRDDAKSHEGAQPADARLPLADIASAHLVLTDQLIAESMRRGRDAEREQLENAGVLPPPPPHAKKAREMRDKAGPRKEKTAKKPLPKNTKAHRLAADAKRRQTTSDPHQGE.

Basic and acidic residues-rich tracts occupy residues 189-199 (RRGRDAEREQL) and 215-227 (AREM…PRKE). A disordered region spans residues 189–260 (RRGRDAEREQ…QTTSDPHQGE (72 aa)). Residues 228-242 (KTAKKPLPKNTKAHR) show a composition bias toward basic residues.

This sequence belongs to the RimP family.

The protein localises to the cytoplasm. Required for maturation of 30S ribosomal subunits. This Afipia carboxidovorans (strain ATCC 49405 / DSM 1227 / KCTC 32145 / OM5) (Oligotropha carboxidovorans) protein is Ribosome maturation factor RimP.